A 280-amino-acid polypeptide reads, in one-letter code: MKKLLISAVSALVLGSGAALANSNVQDHAFSFEGIFGKFDQAQLRRGFQVYSEVCSTCHGMKFVPIRTLSDDGGPQLDPTFVREYAAGLDTIIDKDSGEERDRKETDMFPTRVGDGMGPDLSVMAKARAGFSGPAGSGMNQLFKGIGGPEYIYRYVTGFPEENPACAPEGIDGYYYNEVFQVGGVPDTCKDAAGIKTTHGSWAQMPPALFDDLVTYEDGTPATVDQMGQDVASFLMWAAEPKLVARKQMGLVAVVMLGLLSVMLYLTNKRLWAPYKRQKA.

An N-terminal signal peptide occupies residues 1 to 21 (MKKLLISAVSALVLGSGAALA). C55, C58, H59, and M205 together coordinate heme c. The helical transmembrane segment at 249 to 267 (MGLVAVVMLGLLSVMLYLT) threads the bilayer.

As to quaternary structure, the main subunits of complex b-c1 are: cytochrome b, cytochrome c1 and the Rieske protein. Binds 1 heme c group covalently per subunit.

The protein localises to the cell membrane. In terms of biological role, component of the ubiquinol-cytochrome c reductase complex (complex III or cytochrome b-c1 complex), which is a respiratory chain that generates an electrochemical potential coupled to ATP synthesis. c1 functions as an electron donor to cytochrome c. The polypeptide is Cytochrome c1 (petC) (Rhodobacter capsulatus (Rhodopseudomonas capsulata)).